Consider the following 849-residue polypeptide: Probable ubiquitin carboxyl-terminal hydrolase 1 (849 aa).

The region spanning 20–120 is the DUSP domain; the sequence is QPASLPFQDS…EGLAIERKVL (101 aa). The 570-residue stretch at 279–848 folds into the USP domain; sequence CGLYNLGNSC…SAYVLFYRAK (570 aa). The active-site Nucleophile is Cys288. His806 serves as the catalytic Proton acceptor.

Belongs to the peptidase C19 family.

The catalysed reaction is Thiol-dependent hydrolysis of ester, thioester, amide, peptide and isopeptide bonds formed by the C-terminal Gly of ubiquitin (a 76-residue protein attached to proteins as an intracellular targeting signal).. The polypeptide is Probable ubiquitin carboxyl-terminal hydrolase 1 (ubp1) (Schizosaccharomyces pombe (strain 972 / ATCC 24843) (Fission yeast)).